The primary structure comprises 443 residues: Xaa-Pro dipeptidase (443 aa).

Mn(2+) is bound by residues Asp-246, Asp-257, His-339, Glu-384, and Glu-423.

This sequence belongs to the peptidase M24B family. Bacterial-type prolidase subfamily. Mn(2+) is required as a cofactor.

The enzyme catalyses Xaa-L-Pro dipeptide + H2O = an L-alpha-amino acid + L-proline. Functionally, splits dipeptides with a prolyl residue in the C-terminal position. The polypeptide is Xaa-Pro dipeptidase (Enterobacter sp. (strain 638)).